Consider the following 776-residue polypeptide: Isoamylase (776 aa).

The first 26 residues, 1-26, serve as a signal peptide directing secretion; that stretch reads MKCPKILAALLGCAVLAGVPAMPAHA. The Ca(2+) site is built by aspartate 154, glutamate 255, threonine 256, asparagine 258, and aspartate 285. Catalysis depends on aspartate 401, which acts as the Nucleophile. Cysteine 410 and cysteine 422 are oxidised to a cystine. Residue glutamate 461 is the Proton donor of the active site. 2 disulfides stabilise this stretch: cysteine 546–cysteine 616 and cysteine 738–cysteine 766.

The protein belongs to the glycosyl hydrolase 13 family. As to quaternary structure, monomer. Ca(2+) serves as cofactor.

It is found in the secreted. The enzyme catalyses Hydrolysis of (1-&gt;6)-alpha-D-glucosidic branch linkages in glycogen, amylopectin and their beta-limit dextrins.. The polypeptide is Isoamylase (iam) (Pseudomonas amyloderamosa).